We begin with the raw amino-acid sequence, 3093 residues long: Intermembrane lipid transfer protein VPS13A (3093 aa).

The 114-residue stretch at 3–116 (FESVVVDVLN…LMEAKQQELK (114 aa)) folds into the Chorein N-terminal domain. A TPR 1 repeat occupies 373-406 (LTSKKPPGELLVSLEELEKTLDVLNITIARQQAE). Serine 839 carries the phosphoserine modification. Residues 842–848 (EFFDAPC) carry the FFAT motif. The residue at position 1416 (serine 1416) is a Phosphoserine. In terms of domain architecture, SHR-BD spans 2209-2454 (VAFHSPYWMV…VFYTWADPVG (246 aa)). Residues 2860 to 2898 (ILGLDVLGNPFGLIREFSEGVEAFFYEPYQGAIQGPEEF) form a TPR 2 repeat. Positions 2953-3027 (PAGFREGITR…SSTFQGIKRA (75 aa)) are required for lipid droplet localization.

This sequence belongs to the VPS13 family. Interacts (via FFAT motif) with VAPA and VAPB. Interacts with RAB7A. Interacts with XK.

Its subcellular location is the mitochondrion outer membrane. The protein resides in the endoplasmic reticulum membrane. It localises to the endosome membrane. It is found in the lysosome membrane. The protein localises to the lipid droplet. Its subcellular location is the golgi apparatus. The protein resides in the cytoplasmic vesicle. It localises to the secretory vesicle. It is found in the neuronal dense core vesicle. Functionally, mediates the transfer of lipids between membranes at organelle contact sites. Required for the formation or stabilization of ER-mitochondria contact sites which enable transfer of lipids between the ER and mitochondria. Negatively regulates lipid droplet size and motility. Required for efficient lysosomal protein degradation. The sequence is that of Intermembrane lipid transfer protein VPS13A (VPS13A) from Macaca fascicularis (Crab-eating macaque).